The sequence spans 71 residues: Large ribosomal subunit protein bL31 (71 aa).

Zn(2+) is bound by residues Cys16, Cys18, Cys37, and Cys40.

This sequence belongs to the bacterial ribosomal protein bL31 family. Type A subfamily. Part of the 50S ribosomal subunit. It depends on Zn(2+) as a cofactor.

In terms of biological role, binds the 23S rRNA. This chain is Large ribosomal subunit protein bL31, found in Nitratidesulfovibrio vulgaris (strain DSM 19637 / Miyazaki F) (Desulfovibrio vulgaris).